The following is a 403-amino-acid chain: Cytochrome P450 monooxygenase ustC (403 aa).

A signal peptide spans Met-1–Gly-18. N-linked (GlcNAc...) asparagine glycosylation is found at Asn-52 and Asn-92. Position 318 (Cys-318) interacts with heme.

This sequence belongs to the cytochrome P450 family. Heme serves as cofactor.

The protein operates within mycotoxin biosynthesis. In terms of biological role, cytochrome P450 monooxygenase; part of the gene cluster that mediates the biosynthesis of the secondary metabolite ustiloxin B, an antimitotic tetrapeptide. First, ustA is processed by the subtilisin-like endoprotease Kex2 that is outside the ustiloxin B gene cluster, at the C-terminal side of Arg-Lys, after transfer to Golgi apparatus through the endoplasmic reticulum (ER). Cleavage by KEX2 generates 16 peptides YAIG-I to YAIG-XVI. To process the precursor peptide further, at least two peptidases are necessary to cleave the N-terminal and C-terminal sides of the Tyr-Ala-Ile-Gly core peptide which serves as backbone for the synthesis of ustiloxin B, through cyclization and modification of the tyrosine with a non-protein coding amino acid, norvaline. One of the two peptidases must be the serine peptidase ustP; and the other pepdidase is probably ustH. Macrocyclization of the core peptide derived from ustA requires the tyrosinase ustQ, as well as the homologous oxidases ustYa and ustYb, and leads to the production of the first cyclization product N-desmethylustiloxin F. For the formation of N-desmethylustiloxin F, three oxidation steps are required, hydroxylation at the benzylic position, hydroxylation at either the aromatic ring of Tyr or beta-position of Ile, and oxidative cyclization. UstQ may catalyze the oxidation of a phenol moiety, whereas the ustYa and ustYb are most likely responsible for the remaining two-step oxidations. N-desmethylustiloxin F is then methylated by ustM to yield ustiloxin F which in turn substrate of the cytochrome P450 monooxygenase ustC which catalyzes the formation of S-deoxyustiloxin H. The flavoprotein monooxygenases ustF1 and ustF2 then participate in the modification of the side chain of S-deoxyustiloxin H, leading to the synthesis of an oxime intermediate, via ustiloxin H. Finally, carboxylative dehydration performed by the cysteine desulfurase-like protein ustD yields ustiloxin B. The protein is Cytochrome P450 monooxygenase ustC of Aspergillus flavus (strain ATCC 200026 / FGSC A1120 / IAM 13836 / NRRL 3357 / JCM 12722 / SRRC 167).